The chain runs to 1405 residues: DNA-directed RNA polymerase subunit beta' (1405 aa).

Positions 70, 72, 85, and 88 each coordinate Zn(2+). Asp-460, Asp-462, and Asp-464 together coordinate Mg(2+). Residues Cys-814, Cys-888, Cys-895, and Cys-898 each contribute to the Zn(2+) site.

Belongs to the RNA polymerase beta' chain family. The RNAP catalytic core consists of 2 alpha, 1 beta, 1 beta' and 1 omega subunit. When a sigma factor is associated with the core the holoenzyme is formed, which can initiate transcription. Mg(2+) is required as a cofactor. Zn(2+) serves as cofactor.

The catalysed reaction is RNA(n) + a ribonucleoside 5'-triphosphate = RNA(n+1) + diphosphate. In terms of biological role, DNA-dependent RNA polymerase catalyzes the transcription of DNA into RNA using the four ribonucleoside triphosphates as substrates. The sequence is that of DNA-directed RNA polymerase subunit beta' from Shewanella woodyi (strain ATCC 51908 / MS32).